The primary structure comprises 319 residues: Curved DNA-binding protein (319 aa).

One can recognise a J domain in the interval 5 to 69 (DYYKILGVEP…QKRAEFDEIR (65 aa)).

The protein localises to the cytoplasm. The protein resides in the nucleoid. Functionally, DNA-binding protein that preferentially recognizes a curved DNA sequence. It is probably a functional analog of DnaJ; displays overlapping activities with DnaJ, but functions under different conditions, probably acting as a molecular chaperone in an adaptive response to environmental stresses other than heat shock. Lacks autonomous chaperone activity; binds native substrates and targets them for recognition by DnaK. Its activity is inhibited by the binding of CbpM. This is Curved DNA-binding protein from Pseudomonas putida (strain ATCC 47054 / DSM 6125 / CFBP 8728 / NCIMB 11950 / KT2440).